A 429-amino-acid polypeptide reads, in one-letter code: Enolase (429 aa).

A (2R)-2-phosphoglycerate-binding site is contributed by Q163. The active-site Proton donor is the E205. Residues D242, E287, and D314 each contribute to the Mg(2+) site. (2R)-2-phosphoglycerate is bound by residues K339, R368, S369, and K390. K339 serves as the catalytic Proton acceptor.

This sequence belongs to the enolase family. It depends on Mg(2+) as a cofactor.

The protein localises to the cytoplasm. The protein resides in the secreted. It localises to the cell surface. It carries out the reaction (2R)-2-phosphoglycerate = phosphoenolpyruvate + H2O. It functions in the pathway carbohydrate degradation; glycolysis; pyruvate from D-glyceraldehyde 3-phosphate: step 4/5. Functionally, catalyzes the reversible conversion of 2-phosphoglycerate (2-PG) into phosphoenolpyruvate (PEP). It is essential for the degradation of carbohydrates via glycolysis. The polypeptide is Enolase (Cupriavidus pinatubonensis (strain JMP 134 / LMG 1197) (Cupriavidus necator (strain JMP 134))).